Reading from the N-terminus, the 419-residue chain is MSIGVQSSGINISHAGLSRLVDAGKSEQGDKAVRDDGRALARADAALAAVVGERVAARRDAVAGSGAQRVELARPKPDAQTRATDRRTVSGLEREHKRLAASQTPRVTGMHDALVQRHVSLDGAKAAHGEGVKRAAGDAPRAAADAPQRFAFADDKAFDAMLALGAAMQKNVQSDLAMQGKLTMLAHDAMMSAAAQDRSIGAAQMTAAIAGGALQATTSLGGAMQQMKSLSTKSMSIEKELKPQAELKQFHAEQALELRGINKPVLSNDEVSHVKIKRDTGETVRHEIDHGGERMSDEHASVLAQEAPARQHRIDMHGMRHEENLVKAGRQQMKGDLLQSGGQIGKNQIDGASAQQQGADRAEQKEDENAQQTAMAAASTRDEAAHRSREAAQKAIDAAKSQVANDNAVAAQVAGNLRT.

2 disordered regions span residues 62 to 91 (VAGS…TVSG) and 338 to 402 (LQSG…AKSQ). Basic and acidic residues-rich tracts occupy residues 71–91 (ELAR…TVSG) and 380–392 (TRDE…REAA).

Belongs to the SctB/SipC family.

It localises to the secreted. The protein is Effector protein BipC (bipC) of Burkholderia pseudomallei (strain 1106a).